The chain runs to 378 residues: Probable selenide, water dikinase (378 aa).

Cys33 is an active-site residue. ATP contacts are provided by residues Lys36, 63–65 (GLD), Asp83, Asp106, and 158–160 (GQT). Mg(2+) is bound at residue Asp65. Asp106 contributes to the Mg(2+) binding site. Asp260 is a binding site for Mg(2+).

The protein belongs to the selenophosphate synthase 1 family. Class I subfamily. As to quaternary structure, homodimer. It depends on Mg(2+) as a cofactor.

It carries out the reaction hydrogenselenide + ATP + H2O = selenophosphate + AMP + phosphate + 2 H(+). In terms of biological role, synthesizes selenophosphate from selenide and ATP. The chain is Probable selenide, water dikinase (seld-1) from Caenorhabditis elegans.